Consider the following 491-residue polypeptide: Argininosuccinate lyase (491 aa).

The protein belongs to the lyase 1 family. Argininosuccinate lyase subfamily.

The protein resides in the cytoplasm. It carries out the reaction 2-(N(omega)-L-arginino)succinate = fumarate + L-arginine. It participates in amino-acid biosynthesis; L-arginine biosynthesis; L-arginine from L-ornithine and carbamoyl phosphate: step 3/3. In Methanococcoides burtonii (strain DSM 6242 / NBRC 107633 / OCM 468 / ACE-M), this protein is Argininosuccinate lyase.